Consider the following 198-residue polypeptide: Large ribosomal subunit protein bL25 (198 aa).

The protein belongs to the bacterial ribosomal protein bL25 family. CTC subfamily. Part of the 50S ribosomal subunit; part of the 5S rRNA/L5/L18/L25 subcomplex. Contacts the 5S rRNA. Binds to the 5S rRNA independently of L5 and L18.

Functionally, this is one of the proteins that binds to the 5S RNA in the ribosome where it forms part of the central protuberance. This is Large ribosomal subunit protein bL25 from Streptomyces coelicolor (strain ATCC BAA-471 / A3(2) / M145).